The chain runs to 97 residues: Large ribosomal subunit protein uL23 (97 aa).

It belongs to the universal ribosomal protein uL23 family. In terms of assembly, part of the 50S ribosomal subunit. Contacts protein L29, and trigger factor when it is bound to the ribosome.

Its function is as follows. One of the early assembly proteins it binds 23S rRNA. One of the proteins that surrounds the polypeptide exit tunnel on the outside of the ribosome. Forms the main docking site for trigger factor binding to the ribosome. The polypeptide is Large ribosomal subunit protein uL23 (Limosilactobacillus fermentum (strain NBRC 3956 / LMG 18251) (Lactobacillus fermentum)).